Here is a 437-residue protein sequence, read N- to C-terminus: tRNA modification GTPase MnmE (437 aa).

3 residues coordinate (6S)-5-formyl-5,6,7,8-tetrahydrofolate: R21, E80, and R120. Residues 218 to 361 (GFVVVLAGPP…LLDRVAAAAG (144 aa)) enclose the TrmE-type G domain. Residue N228 coordinates K(+). Residues 228–233 (NAGKST), 247–253 (SPIPGTT), and 272–275 (DTAG) contribute to the GTP site. Residue S232 coordinates Mg(2+). K(+) contacts are provided by S247, I249, and T252. T253 contacts Mg(2+). K437 contributes to the (6S)-5-formyl-5,6,7,8-tetrahydrofolate binding site.

Belongs to the TRAFAC class TrmE-Era-EngA-EngB-Septin-like GTPase superfamily. TrmE GTPase family. In terms of assembly, homodimer. Heterotetramer of two MnmE and two MnmG subunits. The cofactor is K(+).

The protein resides in the cytoplasm. In terms of biological role, exhibits a very high intrinsic GTPase hydrolysis rate. Involved in the addition of a carboxymethylaminomethyl (cmnm) group at the wobble position (U34) of certain tRNAs, forming tRNA-cmnm(5)s(2)U34. The protein is tRNA modification GTPase MnmE of Methylobacterium sp. (strain 4-46).